A 761-amino-acid polypeptide reads, in one-letter code: Protein ACTIVITY OF BC1 COMPLEX KINASE 8, chloroplastic (761 aa).

A chloroplast-targeting transit peptide spans 1–57 (MATSSSSSSSLLLPNINFNSRQSPTITRSVSIAGIFLPRNRLSYNHNLRIRTRLIRA). Positions 288–648 (RFDYEPIAAA…VKDLRKRWDR (361 aa)) constitute a Protein kinase domain. ATP is bound by residues 294–302 (IAAASLGQV) and Lys315. Asp452 serves as the catalytic Proton acceptor. A helical transmembrane segment spans residues 725 to 745 (PATIAYTVCAFFSLQVLIGII).

Belongs to the protein kinase superfamily. ADCK protein kinase family. As to expression, mostly expressed in leaves and flowers, and, to a lower extent, in stems, siliques and roots.

It localises to the plastid. Its subcellular location is the chloroplast envelope. It is found in the chloroplast membrane. It carries out the reaction L-seryl-[protein] + ATP = O-phospho-L-seryl-[protein] + ADP + H(+). The enzyme catalyses L-threonyl-[protein] + ATP = O-phospho-L-threonyl-[protein] + ADP + H(+). Functionally, involved in resistance to oxidative stress (e.g. hydrogen peroxide H(2)O(2)), high light and heavy metals (e.g. cadmium ions Cd(2+)). Influences responses to reactive oxygen species (ROS) production. Together with SIA1, regulates iron distribution within the chloroplast and mediates the oxidative stress response. Together with ABC1K7, influences chloroplast lipid synthesis/accumulation and modulates chloroplast membrane composition in response to stress. The sequence is that of Protein ACTIVITY OF BC1 COMPLEX KINASE 8, chloroplastic from Arabidopsis thaliana (Mouse-ear cress).